A 335-amino-acid polypeptide reads, in one-letter code: MDLIIPASYDPKLSVRQTQEAIRYIRETFQDEFGKELNLSRLSAPMFVPSATGLNDNLNGVETPVSFSMQDMPETSIEIVHSLAKWKRVALKRFDFEMHSGLYTNMNAIRKDEDLDNIHSIYVDQWDWEKVIDQSERNLTTLKETVQTIFKVIKHMEHEVWYKYPEAVYHLPDQIHFVTTQELEDRFPKLTPKEREDAICKELGCVFLMQIGGTLKSGERHDGRAPDYDDWQLNGDILFWYEPLQKALEISSMGIRVSEESMLKQLKIANAEDRIHLPYHQMLLNHQLPYTIGGGIGQSRLCMLLLGKAHVGEVQASVWPQSMIDQCEENQIHIL.

The protein belongs to the class-II aminoacyl-tRNA synthetase family. AsnA subfamily.

The protein localises to the cytoplasm. It catalyses the reaction L-aspartate + NH4(+) + ATP = L-asparagine + AMP + diphosphate + H(+). The protein operates within amino-acid biosynthesis; L-asparagine biosynthesis; L-asparagine from L-aspartate (ammonia route): step 1/1. The polypeptide is Aspartate--ammonia ligase (Pediococcus pentosaceus (strain ATCC 25745 / CCUG 21536 / LMG 10740 / 183-1w)).